The primary structure comprises 95 residues: Large ribosomal subunit protein bL27 (95 aa).

Positions 1 to 10 are excised as a propeptide; the sequence is MRFILNLQFF.

The protein belongs to the bacterial ribosomal protein bL27 family. The N-terminus is cleaved by ribosomal processing cysteine protease Prp.

The chain is Large ribosomal subunit protein bL27 from Mesoplasma florum (strain ATCC 33453 / NBRC 100688 / NCTC 11704 / L1) (Acholeplasma florum).